The primary structure comprises 391 residues: Matrix metalloproteinase-23 (391 aa).

Residues 1-19 are Cytoplasmic-facing; the sequence is MGWRACLRPEASGAVQGRW. A propeptide spanning residues 1–79 is cleaved from the precursor; sequence MGWRACLRPE…LSMLVTRRRR (79 aa). Residues 20 to 38 form a helical; Signal-anchor for type II membrane protein membrane-spanning segment; that stretch reads LGAVLSGLCLLSALAFLEW. Topologically, residues 39-391 are lumenal; the sequence is LGSPTETAWN…TYSWRVRVRS (353 aa). 2 N-linked (GlcNAc...) asparagine glycosylation sites follow: N93 and N149. H212 contributes to the Zn(2+) binding site. The active site involves E213. 2 residues coordinate Zn(2+): H216 and H222. N-linked (GlcNAc...) asparagine glycosylation is present at N233. Residues 256–290 enclose the ShKT domain; it reads CLDRIFVCTSWARKGFCDVRQRLMKRLCPRSCDFC. Disulfide bonds link C256–C290, C263–C283, and C272–C287. An Ig-like C2-type domain is found at 296–381; the sequence is PTVATTTSPT…VVRHRQRVLT (86 aa). N317 carries N-linked (GlcNAc...) asparagine glycosylation. C322 and C371 are oxidised to a cystine.

Belongs to the peptidase M10A family. It depends on Zn(2+) as a cofactor. Post-translationally, N-glycosylated. In terms of processing, proteolytic cleavage might yield an active form. As to expression, expressed at the highest levels in ovary and uterus. In ovary expression is strictly confined to granulosa cells of preantral and small antral follicles. Detected also in testis and prostate.

Its subcellular location is the membrane. The protein resides in the endoplasmic reticulum membrane. With respect to regulation, inhibited by TIMP2. In terms of biological role, protease. May regulate the surface expression of some potassium channels by retaining them in the endoplasmic reticulum. This Rattus norvegicus (Rat) protein is Matrix metalloproteinase-23 (Mmp23).